Reading from the N-terminus, the 181-residue chain is Putative ankyrin repeat protein RBE_0150 (181 aa).

4 ANK repeats span residues 50 to 79 (IGQKLLIKATYANDLDLVKALHDKGVKLGT), 83 to 114 (LGRTSLHHAIKAGAGKDLIEFLIDNAGIDINA), 118 to 147 (SGSTLMHWAVNSHHIPAIKLLQTKKADYFT), and 151 to 180 (LGQTPLKLAEYYGHDDVIELLAENSSAGYY).

The protein is Putative ankyrin repeat protein RBE_0150 of Rickettsia bellii (strain RML369-C).